The following is a 570-amino-acid chain: Probable glucomannan 4-beta-mannosyltransferase 11 (570 aa).

The helical transmembrane segment at 57 to 77 (LAMTVMILAEKLFVAAVCLAV) threads the bilayer. Residue Asp-157 is part of the active site. The substrate site is built by Asp-216 and Asp-218. Asp-310 is an active-site residue. Helical transmembrane passes span 389–409 (IAAHTVTFIYYCFVIPVSVWL), 412–432 (IEIPLWGVVYVPTVITLCKAV), 522–542 (YSEIFVGICIILSGFYDVLYA), and 548–568 (IFLFIQGLAFLIVGFDYIGVC).

It belongs to the glycosyltransferase 2 family. Plant cellulose synthase-like A subfamily.

Its subcellular location is the golgi apparatus membrane. The catalysed reaction is GDP-mannose + (glucomannan)n = GDP + (glucomannan)n+1.. Its function is as follows. Probable mannan synthase which consists of a 4-beta-mannosyltransferase activity on mannan using GDP-mannose. The beta-1,4-mannan product is the backbone for galactomannan synthesis by galactomannan galactosyltransferase. Galactomannan is a noncellulosic polysaccharides of plant cell wall. The protein is Probable glucomannan 4-beta-mannosyltransferase 11 of Oryza sativa subsp. japonica (Rice).